Consider the following 350-residue polypeptide: Formimidoylglutamase (350 aa).

6 residues coordinate Mn(2+): His130, Asp165, His167, Asp169, Asp269, and Asp271.

This sequence belongs to the arginase family. Requires Mn(2+) as cofactor.

It catalyses the reaction N-formimidoyl-L-glutamate + H2O = formamide + L-glutamate. It participates in amino-acid degradation; L-histidine degradation into L-glutamate; L-glutamate from N-formimidoyl-L-glutamate (hydrolase route): step 1/1. Catalyzes the conversion of N-formimidoyl-L-glutamate to L-glutamate and formamide. This is Formimidoylglutamase from Aliivibrio fischeri (strain ATCC 700601 / ES114) (Vibrio fischeri).